Consider the following 359-residue polypeptide: Fructose-bisphosphate aldolase, cytoplasmic isozyme (359 aa).

2 residues coordinate substrate: Arg52 and Lys142. Glu184 (proton acceptor) is an active-site residue. Lys226 acts as the Schiff-base intermediate with dihydroxyacetone-P in catalysis.

The protein belongs to the class I fructose-bisphosphate aldolase family.

It localises to the cytoplasm. It catalyses the reaction beta-D-fructose 1,6-bisphosphate = D-glyceraldehyde 3-phosphate + dihydroxyacetone phosphate. It participates in carbohydrate degradation; glycolysis; D-glyceraldehyde 3-phosphate and glycerone phosphate from D-glucose: step 4/4. The polypeptide is Fructose-bisphosphate aldolase, cytoplasmic isozyme (ALDC) (Cicer arietinum (Chickpea)).